The chain runs to 145 residues: 3-hydroxyacyl-[acyl-carrier-protein] dehydratase FabZ (145 aa).

Residue histidine 51 is part of the active site.

It belongs to the thioester dehydratase family. FabZ subfamily.

Its subcellular location is the cytoplasm. The catalysed reaction is a (3R)-hydroxyacyl-[ACP] = a (2E)-enoyl-[ACP] + H2O. Involved in unsaturated fatty acids biosynthesis. Catalyzes the dehydration of short chain beta-hydroxyacyl-ACPs and long chain saturated and unsaturated beta-hydroxyacyl-ACPs. The protein is 3-hydroxyacyl-[acyl-carrier-protein] dehydratase FabZ of Macrococcus caseolyticus (strain JCSC5402) (Macrococcoides caseolyticum).